We begin with the raw amino-acid sequence, 348 residues long: Alcohol dehydrogenase 1 (348 aa).

Residues Cys-44, His-67, Cys-98, Cys-101, Cys-104, Cys-112, and Cys-154 each coordinate Zn(2+). NAD(+) contacts are provided by residues 178-184 (GAGGGLG), Asp-202, Lys-207, 269-271 (VGL), and Arg-341.

Belongs to the zinc-containing alcohol dehydrogenase family. As to quaternary structure, homotetramer. Requires Zn(2+) as cofactor.

The protein resides in the cytoplasm. It catalyses the reaction a primary alcohol + NAD(+) = an aldehyde + NADH + H(+). The catalysed reaction is a secondary alcohol + NAD(+) = a ketone + NADH + H(+). Converts ethanol to acetaldehyde and plays a major role in xylose fermentation. This Scheffersomyces stipitis (strain ATCC 58785 / CBS 6054 / NBRC 10063 / NRRL Y-11545) (Yeast) protein is Alcohol dehydrogenase 1 (ADH1).